The chain runs to 477 residues: Ribulose bisphosphate carboxylase large chain (477 aa).

The propeptide occupies 1 to 2 (MS). N-acetylproline is present on Pro3. N6,N6,N6-trimethyllysine is present on Lys14. Substrate contacts are provided by Asn123 and Thr173. Lys175 (proton acceptor) is an active-site residue. Lys177 contacts substrate. Residues Lys201, Asp203, and Glu204 each coordinate Mg(2+). The residue at position 201 (Lys201) is an N6-carboxylysine. His294 acts as the Proton acceptor in catalysis. Residues Arg295, His327, and Ser379 each contribute to the substrate site.

This sequence belongs to the RuBisCO large chain family. Type I subfamily. In terms of assembly, heterohexadecamer of 8 large chains and 8 small chains; disulfide-linked. The disulfide link is formed within the large subunit homodimers. Requires Mg(2+) as cofactor. In terms of processing, the disulfide bond which can form in the large chain dimeric partners within the hexadecamer appears to be associated with oxidative stress and protein turnover.

It is found in the plastid. Its subcellular location is the chloroplast. The enzyme catalyses 2 (2R)-3-phosphoglycerate + 2 H(+) = D-ribulose 1,5-bisphosphate + CO2 + H2O. It catalyses the reaction D-ribulose 1,5-bisphosphate + O2 = 2-phosphoglycolate + (2R)-3-phosphoglycerate + 2 H(+). Its function is as follows. RuBisCO catalyzes two reactions: the carboxylation of D-ribulose 1,5-bisphosphate, the primary event in carbon dioxide fixation, as well as the oxidative fragmentation of the pentose substrate in the photorespiration process. Both reactions occur simultaneously and in competition at the same active site. This chain is Ribulose bisphosphate carboxylase large chain, found in Carthamus tinctorius (Safflower).